Reading from the N-terminus, the 231-residue chain is Large ribosomal subunit protein uL1 (231 aa).

It belongs to the universal ribosomal protein uL1 family. Part of the 50S ribosomal subunit.

Binds directly to 23S rRNA. The L1 stalk is quite mobile in the ribosome, and is involved in E site tRNA release. Its function is as follows. Protein L1 is also a translational repressor protein, it controls the translation of the L11 operon by binding to its mRNA. This chain is Large ribosomal subunit protein uL1, found in Staphylococcus epidermidis (strain ATCC 35984 / DSM 28319 / BCRC 17069 / CCUG 31568 / BM 3577 / RP62A).